A 274-amino-acid polypeptide reads, in one-letter code: Glutamate--cysteine ligase regulatory subunit (274 aa).

Ser-59 bears the Phosphoserine mark. N6-acetyllysine is present on Lys-263.

Belongs to the aldo/keto reductase family. Glutamate--cysteine ligase light chain subfamily. In terms of assembly, heterodimer of a catalytic heavy chain and a regulatory light chain.

The protein operates within sulfur metabolism; glutathione biosynthesis; glutathione from L-cysteine and L-glutamate: step 1/2. This Bos taurus (Bovine) protein is Glutamate--cysteine ligase regulatory subunit (GCLM).